The sequence spans 717 residues: Methylcrotonoyl-CoA carboxylase subunit alpha, mitochondrial (717 aa).

A mitochondrion-targeting transit peptide spans 1 to 38 (MAAAALLAAVDRNQLRRVPILLLQPREWAWKLRTMKYG). The 446-residue stretch at 45 to 490 (ITKVLIANRG…HTDFIPQHHK (446 aa)) folds into the Biotin carboxylation domain. K159 is a binding site for ATP. Residues 163-360 (KSIMAAAGVP…LVEWQLRIAA (198 aa)) form the ATP-grasp domain. Residues K180 and K193 each carry the N6-acetyllysine modification. ATP-binding positions include K201 and 207 to 208 (GG). K233 bears the N6-acetyllysine mark. ATP-binding residues include H251, H278, and E318. R335 is an active-site residue. K490 is modified (N6-acetyllysine). K577 carries the N6-acetyllysine; alternate modification. An N6-succinyllysine; alternate modification is found at K577. The Biotinyl-binding domain maps to 622 to 711 (SIEVGIPVPK…NRHAPLVEFE (90 aa)). An N6-biotinyllysine modification is found at K677.

Probably a dodecamer composed of six biotin-containing alpha subunits (MCCC1) and six beta (MCCC2) subunits. Interacts (via the biotin carboxylation domain) with SIRT4. Biotin serves as cofactor. Post-translationally, acetylated.

The protein resides in the mitochondrion matrix. The enzyme catalyses 3-methylbut-2-enoyl-CoA + hydrogencarbonate + ATP = 3-methyl-(2E)-glutaconyl-CoA + ADP + phosphate + H(+). It functions in the pathway amino-acid degradation; L-leucine degradation; (S)-3-hydroxy-3-methylglutaryl-CoA from 3-isovaleryl-CoA: step 2/3. Its function is as follows. Biotin-attachment subunit of the 3-methylcrotonyl-CoA carboxylase, an enzyme that catalyzes the conversion of 3-methylcrotonyl-CoA to 3-methylglutaconyl-CoA, a critical step for leucine and isovaleric acid catabolism. In Mus musculus (Mouse), this protein is Methylcrotonoyl-CoA carboxylase subunit alpha, mitochondrial (Mccc1).